Here is a 634-residue protein sequence, read N- to C-terminus: Growth hormone receptor (634 aa).

Positions 1 to 18 (MDLWQLLLTLAVAGSSDA) are cleaved as a signal peptide. At 19-260 (FSGSEATPAF…NPSACEEDFQ (242 aa)) the chain is on the extracellular side. N-linked (GlcNAc...) asparagine glycosylation occurs at Asn-46. Cys-56 and Cys-66 are joined by a disulfide. Residue Asn-73 is glycosylated (N-linked (GlcNAc...) asparagine). The cysteines at positions 97 and 108 are disulfide-linked. Residue Asn-111 is glycosylated (N-linked (GlcNAc...) asparagine). Residues Cys-122 and Cys-136 are joined by a disulfide bond. The Fibronectin type-III domain occupies 147–250 (PPVGLNWTLL…EVLLITFPQM (104 aa)). Asn-152, Asn-157, and Asn-196 each carry an N-linked (GlcNAc...) asparagine glycan. The WSXWS motif motif lies at 236–240 (YGKFS). Residues 261-284 (FPWFLIIMFGILGLAVTLFLLIFS) form a helical membrane-spanning segment. Residues 285–634 (KQQRIKMLIL…STDQLNKIMP (350 aa)) are Cytoplasmic-facing. A required for JAK2 binding region spans residues 290–375 (KMLILPPVPV…HEKSLNIFGA (86 aa)). The Box 1 motif signature appears at 293-301 (ILPPVPVPK). The short motif at 336–345 (DSWVEFIELD) is the UbE motif element. Phosphoserine is present on Ser-337. 2 positions are modified to phosphotyrosine: Tyr-483 and Tyr-591.

The protein belongs to the type I cytokine receptor family. Type 1 subfamily. In terms of assembly, on growth hormone (GH) binding, forms homodimers and binds JAK2 via a box 1-containing domain. The soluble form (GHBP) is produced by phorbol ester-promoted proteolytic cleavage at the cell surface (shedding) by ADAM17/TACE. Shedding is inhibited by growth hormone (GH) binding to the receptor probably due to a conformational change in GHR rendering the receptor inaccessible to ADAM17. In terms of processing, on GH binding, phosphorylated on tyrosine residues in the cytoplasmic domain by JAK2. Post-translationally, ubiquitinated by the ECS(SOCS2) complex following ligand-binding and phosphorylation by JAK2, leading to its degradation by the proteasome. Regulation by the ECS(SOCS2) complex acts as a negative feedback loop of growth hormone receptor signaling. Ubiquitination is not sufficient for GHR internalization.

It localises to the cell membrane. It is found in the secreted. Functionally, receptor for pituitary gland growth hormone (GH1) involved in regulating postnatal body growth. On ligand binding, couples to the JAK2/STAT5 pathway. Its function is as follows. The soluble form (GHBP) acts as a reservoir of growth hormone in plasma and may be a modulator/inhibitor of GH signaling. The sequence is that of Growth hormone receptor (GHR) from Bos indicus (Zebu).